Here is a 245-residue protein sequence, read N- to C-terminus: Protein virB1 (245 aa).

The signal sequence occupies residues 1–28 (MLKATGPLSIILLASTCPSSGAAPLSFA). Positions 176–245 (LVPPLTARPK…LFDLNQGGPQ (70 aa)) are disordered. Positions 183–193 (RPKDDREKPGS) are enriched in basic and acidic residues.

Belongs to the virb1 family.

Its function is as follows. VirB proteins are suggested to act at the bacterial surface and there play an important role in directing T-DNA transfer to plant cells. The chain is Protein virB1 (virB1) from Agrobacterium fabrum (strain C58 / ATCC 33970) (Agrobacterium tumefaciens (strain C58)).